We begin with the raw amino-acid sequence, 323 residues long: COP9 signalosome complex subunit 6 (323 aa).

The MPN domain maps to 37 to 170 (VALHPLVILN…VSVFESVIDI (134 aa)).

This sequence belongs to the peptidase M67A family. CSN6 subfamily. In terms of assembly, component of the CSN complex, composed of COPS1/GPS1, COPS2, COPS3, COPS4, COPS5, COPS6, COPS7 (COPS7A or COPS7B), COPS8 and COPS9. In the complex, it probably interacts directly with COPS2, COPS4, COPS5, COPS7 (COPS7A or COPS7B) and COPS9. Interacts with the translation initiation factor EIF3S6. Interacts weakly with RBX1. Directly interacts with COP1 and 14-3-3 protein sigma/SFN. Interacts with ERCC6.

The protein localises to the cytoplasm. The protein resides in the nucleus. Its function is as follows. Component of the COP9 signalosome complex (CSN), a complex involved in various cellular and developmental processes. The CSN complex is an essential regulator of the ubiquitin (Ubl) conjugation pathway by mediating the deneddylation of the cullin subunits of SCF-type E3 ligase complexes, leading to decrease the Ubl ligase activity of SCF-type complexes such as SCF, CSA or DDB2. The complex is also involved in phosphorylation of p53/TP53, c-jun/JUN, IkappaBalpha/NFKBIA, ITPK1 and IRF8, possibly via its association with CK2 and PKD kinases. CSN-dependent phosphorylation of TP53 and JUN promotes and protects degradation by the Ubl system, respectively. Has some glucocorticoid receptor-responsive activity. Stabilizes COP1 through reducing COP1 auto-ubiquitination and decelerating COP1 turnover rate, hence regulates the ubiquitination of COP1 targets, including SFN. The chain is COP9 signalosome complex subunit 6 (COPS6) from Sus scrofa (Pig).